A 275-amino-acid chain; its full sequence is Trypsin-3 (275 aa).

The signal sequence occupies residues 1 to 22 (MISNKIAILLAVLVVAVACAQA). Residues 23–48 (RVALKHRSVQALPRFLPRPKYDVGHR) constitute a propeptide, activation peptide. The region spanning 49–274 (IVGGFEIDVS…VRDWVRENSG (226 aa)) is the Peptidase S1 domain. The cysteines at positions 74 and 90 are disulfide-linked. Active-site charge relay system residues include His89 and Asp134. Cystine bridges form between Cys199–Cys215 and Cys226–Cys250. Ser230 acts as the Charge relay system in catalysis.

This sequence belongs to the peptidase S1 family. Expressed in the midgut. Expression levels drop a few hours after blood feeding and pick up again 28 hours later.

Its subcellular location is the secreted. The catalysed reaction is Preferential cleavage: Arg-|-Xaa, Lys-|-Xaa.. In terms of biological role, constitutive trypsin that is expressed 2 days after emergence, coinciding with host seeking behavior of the female. The protein is Trypsin-3 (TRYP3) of Anopheles gambiae (African malaria mosquito).